The primary structure comprises 515 residues: 2-isopropylmalate synthase (515 aa).

Residues 4–266 (IKIFDTTLRD…ETGLILKETK (263 aa)) enclose the Pyruvate carboxyltransferase domain. D13, H201, H203, and N237 together coordinate Mn(2+). A regulatory domain region spans residues 392–515 (KLIQFGVSYD…ANLTRLVYES (124 aa)).

This sequence belongs to the alpha-IPM synthase/homocitrate synthase family. LeuA type 1 subfamily. Homodimer. It depends on Mn(2+) as a cofactor.

It is found in the cytoplasm. The enzyme catalyses 3-methyl-2-oxobutanoate + acetyl-CoA + H2O = (2S)-2-isopropylmalate + CoA + H(+). It participates in amino-acid biosynthesis; L-leucine biosynthesis; L-leucine from 3-methyl-2-oxobutanoate: step 1/4. In terms of biological role, catalyzes the condensation of the acetyl group of acetyl-CoA with 3-methyl-2-oxobutanoate (2-ketoisovalerate) to form 3-carboxy-3-hydroxy-4-methylpentanoate (2-isopropylmalate). This is 2-isopropylmalate synthase from Oceanobacillus iheyensis (strain DSM 14371 / CIP 107618 / JCM 11309 / KCTC 3954 / HTE831).